Reading from the N-terminus, the 465-residue chain is Paired box protein Pax-8 (465 aa).

A DNA-binding region (paired) is located at residues 26-152 (GHGGLNQLGG…SSINRIIRTK (127 aa)). A PAI subdomain region spans residues 29-85 (GLNQLGGAFVNGRPLPEVVRQRIVDLAHQGVRPCDISRQLRVSHGCVSKILGRYYET). Positions 104–152 (KVVEKIGDYKRQNPTMFAWEIRDRLLTDGVCDNDTVPSVSSINRIIRTK) are RED subdomain. The interval 206-227 (PSADGKRKLDDSDQESCRLSID) is disordered.

Expression starts at late gastrula stages in cells fated to become the primordia of the otic system and the pronephric kidney. Expression is maintained in these two structures through late tailbud stages. Does not appear to be expressed in the thyroid gland.

Its subcellular location is the nucleus. In terms of biological role, probable transcription factor. Involved in kidney development, acting synergistically with lhx1/lim-1 to establish the pronephric primordium in late gastrulae/early neurulae. The polypeptide is Paired box protein Pax-8 (Xenopus laevis (African clawed frog)).